The primary structure comprises 190 residues: Class III hydrophobin F (190 aa).

A signal peptide spans 1-18; that stretch reads MRPITILCTLATLSTTLA. Intrachain disulfides connect Cys-54/Cys-115, Cys-62/Cys-109, Cys-63/Cys-97, and Cys-116/Cys-131.

It belongs to the fungal hydrophobin family. As to quaternary structure, self-assembles to form functional amyloid fibrils called rodlets. Self-assembly into fibrillar rodlets occurs spontaneously at hydrophobic:hydrophilic interfaces and the rodlets further associate laterally to form amphipathic monolayers.

The protein resides in the secreted. It is found in the cell wall. Its function is as follows. Aerial growth, conidiation, and dispersal of filamentous fungi in the environment rely upon a capability of their secreting small amphipathic proteins called hydrophobins (HPBs) with low sequence identity. Class I can self-assemble into an outermost layer of rodlet bundles on aerial cell surfaces, conferring cellular hydrophobicity that supports fungal growth, development and dispersal; whereas Class II form highly ordered films at water-air interfaces through intermolecular interactions but contribute nothing to the rodlet structure. RodF and rodG belong to Class III, which contains hydrophobins with intermediate (between classes I and II) or atypical characteristics. RodF, unlike rodA, is not required for rodlet formation. The sequence is that of Class III hydrophobin F from Aspergillus fumigatus (strain ATCC MYA-4609 / CBS 101355 / FGSC A1100 / Af293) (Neosartorya fumigata).